Consider the following 225-residue polypeptide: Cytochrome b6-f complex iron-sulfur subunit, chloroplastic (225 aa).

A chloroplast-targeting transit peptide spans 1–46 (MASTALSTASNPTQLCRSRASLGKPVKGLGFGRERVPRTATTITCQ). The helical transmembrane segment at 69–89 (LLGAISLPTVGMLVPYGAFFI) threads the bilayer. Residues 112-208 (AEEWLKTHGP…ADVDDGKVLF (97 aa)) form the Rieske domain. [2Fe-2S] cluster-binding residues include cysteine 154, histidine 156, cysteine 172, and histidine 175. Cysteine 159 and cysteine 174 are oxidised to a cystine.

The protein belongs to the Rieske iron-sulfur protein family. The 4 large subunits of the cytochrome b6-f complex are cytochrome b6, subunit IV (17 kDa polypeptide, petD), cytochrome f and the Rieske protein, while the 4 small subunits are petG, petL, petM and petN. The complex functions as a dimer. Requires [2Fe-2S] cluster as cofactor.

The protein localises to the plastid. It localises to the chloroplast thylakoid membrane. It carries out the reaction 2 oxidized [plastocyanin] + a plastoquinol + 2 H(+)(in) = 2 reduced [plastocyanin] + a plastoquinone + 4 H(+)(out). In terms of biological role, component of the cytochrome b6-f complex, which mediates electron transfer between photosystem II (PSII) and photosystem I (PSI), cyclic electron flow around PSI, and state transitions. The sequence is that of Cytochrome b6-f complex iron-sulfur subunit, chloroplastic (petC) from Oryza sativa subsp. japonica (Rice).